The primary structure comprises 120 residues: Phosphoribosyl-ATP pyrophosphatase (120 aa).

Positions 97 to 120 (REGTSGLVEKASRPAKKDSGTADS) are disordered. The span at 106–120 (KASRPAKKDSGTADS) shows a compositional bias: basic and acidic residues.

The protein belongs to the PRA-PH family.

It localises to the cytoplasm. It catalyses the reaction 1-(5-phospho-beta-D-ribosyl)-ATP + H2O = 1-(5-phospho-beta-D-ribosyl)-5'-AMP + diphosphate + H(+). It participates in amino-acid biosynthesis; L-histidine biosynthesis; L-histidine from 5-phospho-alpha-D-ribose 1-diphosphate: step 2/9. The sequence is that of Phosphoribosyl-ATP pyrophosphatase from Rhodopirellula baltica (strain DSM 10527 / NCIMB 13988 / SH1).